The chain runs to 232 residues: Uridylate kinase (232 aa).

13–14 (GS) contacts ATP. UMP is bound at residue Gly52. ATP is bound by residues Gly53 and Arg57. UMP is bound by residues Asp74 and 122–128 (LQPGQST). Residues Thr147, Tyr153, and Asp156 each contribute to the ATP site.

It belongs to the UMP kinase family. Homohexamer.

It is found in the cytoplasm. It catalyses the reaction UMP + ATP = UDP + ADP. It participates in pyrimidine metabolism; CTP biosynthesis via de novo pathway; UDP from UMP (UMPK route): step 1/1. Its activity is regulated as follows. Inhibited by UTP. Catalyzes the reversible phosphorylation of UMP to UDP. The chain is Uridylate kinase from Thermofilum pendens (strain DSM 2475 / Hrk 5).